The following is a 446-amino-acid chain: Ribosomal protein uS12 methylthiotransferase RimO (446 aa).

One can recognise an MTTase N-terminal domain in the interval 4 to 119 (YKVGMVSLGC…IDKVIKEFIE (116 aa)). C13, C48, C82, C157, C161, and C164 together coordinate [4Fe-4S] cluster. In terms of domain architecture, Radical SAM core spans 143–373 (TTQKESAYIR…MLSQEKISND (231 aa)). Positions 376–442 (KLKVNKKYDI…DYDLIGVVED (67 aa)) constitute a TRAM domain.

It belongs to the methylthiotransferase family. RimO subfamily. [4Fe-4S] cluster serves as cofactor.

Its subcellular location is the cytoplasm. The enzyme catalyses L-aspartate(89)-[ribosomal protein uS12]-hydrogen + (sulfur carrier)-SH + AH2 + 2 S-adenosyl-L-methionine = 3-methylsulfanyl-L-aspartate(89)-[ribosomal protein uS12]-hydrogen + (sulfur carrier)-H + 5'-deoxyadenosine + L-methionine + A + S-adenosyl-L-homocysteine + 2 H(+). In terms of biological role, catalyzes the methylthiolation of an aspartic acid residue of ribosomal protein uS12. In Clostridium botulinum (strain Eklund 17B / Type B), this protein is Ribosomal protein uS12 methylthiotransferase RimO.